A 400-amino-acid polypeptide reads, in one-letter code: Na(+)/H(+) antiporter NhaA 1 (400 aa).

Helical transmembrane passes span 25–45, 67–87, 103–123, 130–150, 159–179, 184–204, 213–233, 264–284, 303–323, 339–359, and 372–392; these read IVLMFCAIIAIIIANSNFSSM, ILHWINDGLMAIFFLVVGMEI, ILPVSAAIGGMVVPAIIYALF, IIGWGIPMATDIAFALGILSL, IIIFLTALAIVDDLGAIIVIA, SEISWIALILGLIIFLAIILA, WLYIIFGIALWICFLKSGVHE, VLTPLSSFIIMPIFALANSGI, IIFGLFIGKQIGIFGASYILV, LYGASVLGGIGFTMSLFVSSL, and ISIIIASILSAAFGAAIFKII.

It belongs to the NhaA Na(+)/H(+) (TC 2.A.33) antiporter family.

It is found in the cell membrane. It catalyses the reaction Na(+)(in) + 2 H(+)(out) = Na(+)(out) + 2 H(+)(in). Functionally, na(+)/H(+) antiporter that extrudes sodium in exchange for external protons. The chain is Na(+)/H(+) antiporter NhaA 1 from Clostridium beijerinckii (strain ATCC 51743 / NCIMB 8052) (Clostridium acetobutylicum).